The chain runs to 186 residues: dCTP deaminase (186 aa).

107–112 (KSTYAR) is a dCTP binding site. The active-site Proton donor/acceptor is the glutamate 133. DCTP is bound by residues glutamine 152, tyrosine 166, and glutamine 176.

It belongs to the dCTP deaminase family. Homotrimer.

The catalysed reaction is dCTP + H2O + H(+) = dUTP + NH4(+). It participates in pyrimidine metabolism; dUMP biosynthesis; dUMP from dCTP (dUTP route): step 1/2. Catalyzes the deamination of dCTP to dUTP. In Campylobacter lari (strain RM2100 / D67 / ATCC BAA-1060), this protein is dCTP deaminase.